Here is a 1039-residue protein sequence, read N- to C-terminus: Serine/threonine-protein kinase Tao (1039 aa).

The 254-residue stretch at 27 to 280 folds into the Protein kinase domain; that stretch reads FEDLREIGHG…SAKLLTHAYV (254 aa). ATP-binding positions include 33 to 41 and Lys56; that span reads IGHGSFGAV. Asp150 functions as the Proton acceptor in the catalytic mechanism. Disordered regions lie at residues 324 to 457, 485 to 508, 629 to 648, and 677 to 707; these read SAVG…NSAS, GGGGTGTGGSGGGSPASGGPLADR, HQQDVERRAKQTSAAEKKLH, and WKRELSMDESTPKRQRDLTLQSQKDNLKQHE. The segment covering 341–350 has biased composition (polar residues); that stretch reads SSKSNSITSE. Positions 359–376 are enriched in low complexity; the sequence is SAASSQSSSSNSIPAAAQ. Residues 377–387 show a composition bias toward basic residues; the sequence is NHHHIAAHHHQ. Composition is skewed to low complexity over residues 388-397 and 413-429; these read QAASAAVAAA and PSGQQGQPVPPGAVSRN. Over residues 444–454 the composition is skewed to polar residues; it reads HSMNNNVTPTN. Positions 485–500 are enriched in gly residues; the sequence is GGGGTGTGGSGGGSPA. Coiled coils occupy residues 631–765 and 835–993; these read QDVE…MLLK and KQFR…DNES. Basic and acidic residues predominate over residues 677 to 693; the sequence is WKRELSMDESTPKRQRD.

It belongs to the protein kinase superfamily. STE Ser/Thr protein kinase family. STE20 subfamily. As to quaternary structure, interacts with Schip1; the interaction enhances Tao kinase activity. It depends on Mg(2+) as a cofactor. In terms of processing, autophosphorylated. In terms of tissue distribution, in the posterior midgut, expressed in almost all intestinal cell types including intestinal stem cells and enterocytes (at protein level). Maternally expressed, ubiquitously distributed in the egg and early embryo and enriched in the germ plasm at the posterior pole of the early embryo including the pole cells.

The protein resides in the cytoplasm. The protein localises to the cytoskeleton. Its subcellular location is the spindle. It is found in the membrane. It localises to the perikaryon. The protein resides in the cell cortex. The protein localises to the cell projection. Its subcellular location is the axon. It carries out the reaction L-seryl-[protein] + ATP = O-phospho-L-seryl-[protein] + ADP + H(+). The enzyme catalyses L-threonyl-[protein] + ATP = O-phospho-L-threonyl-[protein] + ADP + H(+). In terms of biological role, serine/threonine-protein kinase which regulates the Hippo/SWH (Sav/Wts/Hpo) signaling pathway, a signaling pathway that plays a pivotal role in organ size control and tumor suppression by restricting proliferation and promoting apoptosis. The core of this pathway is composed of a kinase cascade wherein Hippo (hpo), in complex with its regulatory protein Salvador (sav), phosphorylates and activates Warts (wts) in complex with its regulatory protein Mats, which in turn phosphorylates and inactivates the Yorkie (yki) oncoprotein. In imaginal cells, phosphorylates and activates hpo and leads to repression of yki. In the midgut, negatively regulates the proliferation of intestinal stem cells through the Hippo/SWH pathway. Independent of the hippo/SWH pathway, regulates epithelial morphogenesis in follicle cells by promoting the endocytosis of Fas2 and reducing lateral adhesion between epithelial cells which, in turn, permits shrinking of the lateral membrane and initiates morphogenesis of the squamous epithelium. Required for the development of both the mushroom body and the ellipsoid body in the brain and may act as a negative regulator of the par-1 kinase. Negatively regulates the JNK pathway which increases sensitivity to ethanol exposure. Plays a role in the control of cell shape by negatively regulating the growth of microtubule plus-ends as they contact the actin-rich cell cortex. Required for the induction of apoptosis in pole cells by promoting expression of skl which enhances activity of the apoptosis activator hid. Functionally, induces in vitro expression of large, highly dynamic, microtubule-dependent lamellopodia-like cytoplasmic expansions which constantly probe the environment. Induces in vitro expression of actin-dependent filopodia-like cytoplasmic protrusions which firmly attach to the substrate. Antagonizes the activity of isoform D. The sequence is that of Serine/threonine-protein kinase Tao from Drosophila melanogaster (Fruit fly).